Reading from the N-terminus, the 354-residue chain is Glycine betaine/proline betaine transport system permease protein ProW (354 aa).

Residues 1–41 (MADQNNPWDTTPAADSAAQSADAWGTPTTAPTDGGGADWLT) are disordered. Topologically, residues 1–99 (MADQNNPWDT…VDYILNGFQQ (99 aa)) are cytoplasmic. Over residues 13 to 32 (AADSAAQSADAWGTPTTAPT) the composition is skewed to low complexity. The chain crosses the membrane as a helical span at residues 100-120 (LLLGMPAPVAIIVFALIAWQI). A topological domain (periplasmic) is located at residue Ser-121. The helical transmembrane segment at 122 to 142 (GVGMGVATLVSLIAIGAIGAW) threads the bilayer. The Cytoplasmic segment spans residues 143–148 (SQAMVT). The ABC transmembrane type-1 domain maps to 145-324 (AMVTLALVLT…ILAIILDRLT (180 aa)). A helical transmembrane segment spans residues 149 to 169 (LALVLTALLFCIVIGLPLGIW). Topologically, residues 170-198 (LARSPRAAKIIRPLLDAMQTTPAFVYLVP) are periplasmic. A helical membrane pass occupies residues 199–219 (IVMLFGIGNVPGVVVTIIFAL). Residues 220–270 (PPIIRLTILGINQVPADLIEASRSFGASPRQMLFKVQLPLAMPTIMAGVNQ) are Cytoplasmic-facing. The helical transmembrane segment at 271-291 (TLMLALSMVVIASMIAVGGLG) threads the bilayer. Topologically, residues 292–300 (QMVLRGIGR) are periplasmic. The chain crosses the membrane as a helical span at residues 301 to 321 (LDMGLATVGGVGIVILAIILD). Over 322-354 (RLTQAVGRDSRSRGNRRWYTTGPVGLLTRPFIK) the chain is Cytoplasmic.

This sequence belongs to the binding-protein-dependent transport system permease family. CysTW subfamily. As to quaternary structure, the complex is composed of two ATP-binding proteins (ProV), two transmembrane proteins (ProW) and a solute-binding protein (ProX).

Its subcellular location is the cell inner membrane. Functionally, part of the ProU ABC transporter complex involved in glycine betaine and proline betaine uptake. Probably responsible for the translocation of the substrate across the membrane. This is Glycine betaine/proline betaine transport system permease protein ProW from Escherichia coli (strain K12).